Consider the following 300-residue polypeptide: tRNA dimethylallyltransferase (300 aa).

8–15 (GASASGKS) is an ATP binding site. Position 10-15 (10-15 (SASGKS)) interacts with substrate. Residues 33 to 36 (DSLS) are interaction with substrate tRNA.

Belongs to the IPP transferase family. Monomer. Mg(2+) is required as a cofactor.

It catalyses the reaction adenosine(37) in tRNA + dimethylallyl diphosphate = N(6)-dimethylallyladenosine(37) in tRNA + diphosphate. Its function is as follows. Catalyzes the transfer of a dimethylallyl group onto the adenine at position 37 in tRNAs that read codons beginning with uridine, leading to the formation of N6-(dimethylallyl)adenosine (i(6)A). This Wolinella succinogenes (strain ATCC 29543 / DSM 1740 / CCUG 13145 / JCM 31913 / LMG 7466 / NCTC 11488 / FDC 602W) (Vibrio succinogenes) protein is tRNA dimethylallyltransferase.